A 559-amino-acid chain; its full sequence is Thermosome subunit alpha (559 aa).

Positions 535–547 (SEKKGGEGSKEES) are enriched in basic and acidic residues. A disordered region spans residues 535 to 559 (SEKKGGEGSKEESGGEGGSTPSLGD).

The protein belongs to the TCP-1 chaperonin family. In terms of assembly, forms a Heterooligomeric complex of two stacked eight-membered rings.

In terms of biological role, molecular chaperone; binds unfolded polypeptides in vitro, and has a weak ATPase activity. The chain is Thermosome subunit alpha (thsA) from Saccharolobus solfataricus (strain ATCC 35092 / DSM 1617 / JCM 11322 / P2) (Sulfolobus solfataricus).